Reading from the N-terminus, the 370-residue chain is MSQDYYQVLGVSKTASQADIKKAYLKLAKQYHPDTTNAHDAEKKFKEINAAYDVLKDEQKRAAYDRFGHDAFQNQQARGGGNNSGFHHDINDIFGDFFSDFMGSGRRKQTSSKIRGSDLKYDLTIKLEEAFHGIEKNISFSSEVKCDACHGTGSEKGETVTTCDSCGGVGVTRIQQGFFTLEQTCHKCQGNGQIIKNPCKKCHGMGRYHKQRNLSINIPAGVENGTRIRHSGEGEAGIRGGNNGDLYVDIAIKPHDIYKIDGANLHCKLPISFVHAALGGEIEVPVIEGGKVKLTIPAGTQNGDQLRLRSKGMSKIRSTIRGDMLTHIHVEVPKNLSKRQRELLEEFKKESINEKENDSSFFNKMKSMWS.

Residues 4–68 enclose the J domain; it reads DYYQVLGVSK…QKRAAYDRFG (65 aa). Residues 133 to 211 form a CR-type zinc finger; the sequence is GIEKNISFSS…CHGMGRYHKQ (79 aa). Zn(2+) is bound by residues Cys146, Cys149, Cys163, Cys166, Cys185, Cys188, Cys199, and Cys202. 4 CXXCXGXG motif repeats span residues 146–153, 163–170, 185–192, and 199–206; these read CDACHGTG, CDSCGGVG, CHKCQGNG, and CKKCHGMG.

Belongs to the DnaJ family. In terms of assembly, homodimer. Zn(2+) is required as a cofactor.

It localises to the cytoplasm. Functionally, participates actively in the response to hyperosmotic and heat shock by preventing the aggregation of stress-denatured proteins and by disaggregating proteins, also in an autonomous, DnaK-independent fashion. Unfolded proteins bind initially to DnaJ; upon interaction with the DnaJ-bound protein, DnaK hydrolyzes its bound ATP, resulting in the formation of a stable complex. GrpE releases ADP from DnaK; ATP binding to DnaK triggers the release of the substrate protein, thus completing the reaction cycle. Several rounds of ATP-dependent interactions between DnaJ, DnaK and GrpE are required for fully efficient folding. Also involved, together with DnaK and GrpE, in the DNA replication of plasmids through activation of initiation proteins. This chain is Chaperone protein DnaJ, found in Rickettsia typhi (strain ATCC VR-144 / Wilmington).